A 141-amino-acid polypeptide reads, in one-letter code: Acetyltransferase YpeA (141 aa).

An N-acetyltransferase domain is found at 1–141 (MEIRVFRQED…GKRLIEDEEY (141 aa)).

It belongs to the acetyltransferase family. YpeA subfamily.

In Escherichia coli O157:H7, this protein is Acetyltransferase YpeA.